Consider the following 188-residue polypeptide: Dual specificity protein phosphatase 18 (188 aa).

One can recognise a Tyrosine-protein phosphatase domain in the interval 19-160 (GLSQITKSLF…LIHYELQLFG (142 aa)). The interval 95-141 (MQKGRTLLHCAAGVSRSAALCLAYLMKYHAMSLVDAHTWTKSCRPII) is sufficient for mitochondrial localization. Residue cysteine 104 is the Phosphocysteine intermediate of the active site.

It belongs to the protein-tyrosine phosphatase family. Non-receptor class dual specificity subfamily.

It localises to the cytoplasm. Its subcellular location is the nucleus. The protein resides in the mitochondrion inner membrane. The catalysed reaction is O-phospho-L-tyrosyl-[protein] + H2O = L-tyrosyl-[protein] + phosphate. It catalyses the reaction O-phospho-L-seryl-[protein] + H2O = L-seryl-[protein] + phosphate. The enzyme catalyses O-phospho-L-threonyl-[protein] + H2O = L-threonyl-[protein] + phosphate. In terms of biological role, can dephosphorylate single and diphosphorylated synthetic MAPK peptides, with preference for the phosphotyrosine and diphosphorylated forms over phosphothreonine. In vitro, dephosphorylates p-nitrophenyl phosphate (pNPP). This chain is Dual specificity protein phosphatase 18 (Dusp18), found in Mus musculus (Mouse).